Here is a 124-residue protein sequence, read N- to C-terminus: uncharacterized protein (124 aa).

The segment at Met-1 to Leu-28 is disordered. Residues Ser-9–Leu-28 are compositionally biased toward basic and acidic residues.

This is an uncharacterized protein from Mus musculus (Mouse).